Here is a 566-residue protein sequence, read N- to C-terminus: Phosphatidylinositol 4-kinase gamma 4 (566 aa).

2 consecutive Ubiquitin-like domains span residues 34–111 and 112–190; these read TIMI…SDLQ and VLDV…AKVR. The span at 250-263 shows a compositional bias: polar residues; that stretch reads DGLKSGNSPVRSSE. Residues 250–272 are disordered; the sequence is DGLKSGNSPVRSSEGTGGAYFMQ. The 293-residue stretch at 255-547 folds into the PI3K/PI4K catalytic domain; sequence GNSPVRSSEG…AVLPGTSEAA (293 aa). The tract at residues 261–267 is G-loop; sequence SSEGTGG. ATP contacts are provided by residues 262–268, lysine 284, and 374–377; these read SEGTGGA and QMFT. A catalytic loop region spans residues 407-415; that stretch reads ANADRHGGN. Residues 430 to 456 form an activation loop region; the sequence is PIDHGYCLPESFEDCTFEWLYWPQARK. Aspartate 432 is a binding site for ATP.

This sequence belongs to the PI3/PI4-kinase family. Type II PI4K subfamily. In terms of assembly, interacts with RPN10, UFD1 and CDC48 in vitro. Autophosphorylated.

It is found in the membrane. It catalyses the reaction a 1,2-diacyl-sn-glycero-3-phospho-(1D-myo-inositol) + ATP = a 1,2-diacyl-sn-glycero-3-phospho-(1D-myo-inositol 4-phosphate) + ADP + H(+). The phosphorylation of phosphatidylinositol (PI) to PI4P is the first committed step in the generation of phosphatidylinositol 4,5-bisphosphate (PIP2), a precursor of the second messenger inositol 1,4,5-trisphosphate (InsP3). Undergoes autophosphorylation and phosphorylates serine/threonine residues of protein substrates. Phosphorylates RPN10 and UFD1 in vitro. This is Phosphatidylinositol 4-kinase gamma 4 from Arabidopsis thaliana (Mouse-ear cress).